The primary structure comprises 578 residues: L-2,3-diaminopropanoate--citrate ligase (578 aa).

It belongs to the IucA/IucC family. Forms a mixture of monomer and dimer in solution.

It catalyses the reaction (S)-2,3-diaminopropanoate + citrate + ATP = 2-[(L-alanin-3-ylcarbamoyl)methyl]-2-hydroxybutanedioate + AMP + diphosphate. It participates in siderophore biosynthesis. Functionally, catalyzes the synthesis of citryl-L-2,3-diaminopropionic acid from L-2,3-diaminopropionic acid (L-Dap) and citrate, the first step in staphyloferrin B biosynthesis. The chain is L-2,3-diaminopropanoate--citrate ligase from Staphylococcus aureus (strain NCTC 8325 / PS 47).